Reading from the N-terminus, the 260-residue chain is Snake venom serine protease homolog KN7 (260 aa).

An N-terminal signal peptide occupies residues 1–18 (MVLIRVLANLLILQLSYA). Positions 19–24 (QKSSEL) are excised as a propeptide. One can recognise a Peptidase S1 domain in the interval 25–251 (IIGGDECNIN…HLDWIKSIIA (227 aa)). Intrachain disulfides connect C31/C165, C52/C68, C100/C258, C144/C212, C176/C191, and C202/C227. 3 N-linked (GlcNAc...) asparagine glycosylation sites follow: N83, N123, and N124.

Belongs to the peptidase S1 family. Snake venom subfamily. In terms of tissue distribution, expressed by the venom gland.

The protein localises to the secreted. In terms of biological role, snake venom serine protease homolog that may act in the hemostasis system of the prey. This chain is Snake venom serine protease homolog KN7, found in Trimeresurus stejnegeri (Chinese green tree viper).